Consider the following 350-residue polypeptide: Solute carrier family 35 member E4 (350 aa).

Transmembrane regions (helical) follow at residues 40–60 (VLGQPALARVVVAALVWLLAG), 79–99 (PLLLSALHMLAAAVACHWGAQ), 110–130 (VLLLSLTFGTSMACGNVGLST), 135–155 (LAQLATTTTPLFTLALSALLL), 218–238 (VTLLYATSLPSFCLLAGAALV), 258–278 (VLLSCFLSVVYNLASFSLLAL), 279–299 (TSALTVHVLGNLTVVGNLILS), and 301–321 (LLFGSHLSALSYVGIALTLSG). An EamA domain is found at 125-179 (NVGLSTVPLDLAQLATTTTPLFTLALSALLLGRRHHPLQFAAMGPLCLGAACSLA).

The protein belongs to the TPT transporter family. SLC35E subfamily.

The protein localises to the membrane. Putative transporter. The sequence is that of Solute carrier family 35 member E4 (Slc35e4) from Rattus norvegicus (Rat).